Reading from the N-terminus, the 575-residue chain is Acetylcholine receptor subunit beta-type acr-2 (575 aa).

A signal peptide spans 1–20 (MKKTVKILLILITVFLKVHC). Residues 21–270 (NGGHDDEAAD…IRRKTLFYTV (250 aa)) are Extracellular-facing. The tract at residues 31 to 57 (FLSHTNIDDPNNSSDPNKNSDQGDTMG) is disordered. The segment covering 38 to 50 (DDPNNSSDPNKNS) has biased composition (low complexity). Residues asparagine 41, asparagine 42, asparagine 80, and asparagine 131 are each glycosylated (N-linked (GlcNAc...) asparagine). Cysteine 185 and cysteine 199 are joined by a disulfide. 3 helical membrane passes run 271–291 (ILII…YLPV), 299–319 (LTIS…KILP), and 331–351 (LLLA…IVNI). Residues 352 to 527 (YFRSALSHKM…WKYVAMVLDR (176 aa)) are Cytoplasmic-facing. Residues 528-548 (LILLIFFGVTLGGTLGIICSA) traverse the membrane as a helical segment.

It belongs to the ligand-gated ion channel (TC 1.A.9) family. Acetylcholine receptor (TC 1.A.9.1) subfamily. As to quaternary structure, component of nicotinic acetylcholine receptor. In cholinergic motoneurons, composed of 2 non-alpha subunits acr-2 and acr-3, and 3 alpha subunits unc-38, unc-63 and acr-12. Specifically expressed in cholinergic ventral cord motoneurons of the VA, VB, DA and DB classes but not AS and VC classes. Expressed in PVQ and DVC neurons in the tail.

The protein resides in the postsynaptic cell membrane. Its subcellular location is the cell membrane. Functionally, non-alpha subunit of nicotinic acetylcholine receptor (nAChR). Acts in cholinergic motoneurons to regulate presynaptic neurotransmitter release, thereby ensuring normal level of excitation of cholinergic motoneurons during locomotion. The polypeptide is Acetylcholine receptor subunit beta-type acr-2 (acr-2) (Caenorhabditis elegans).